A 510-amino-acid chain; its full sequence is NAD(P)H-quinone oxidoreductase subunit 2, chloroplastic (510 aa).

12 helical membrane-spanning segments follow: residues 24 to 44 (LLLFHGSFIFPECILIFGLIL), 59 to 79 (WFYFISSTSLVMSITALFFRW), 99 to 119 (IFQFLILLCSTLCIPLSVEYI), 124 to 144 (MAITEFLLFVLTATLGGMFLC), 149 to 169 (LITIFVAPECFSLCSYLLSGY), 184 to 204 (LLMGGASSSILVHGLSWLYGL), 229 to 249 (ISIALISITVGIGFKLSPAPF), 295 to 315 (WHLLLEILAILSMILGNLIAL), 323 to 343 (MLAYSSIGQIGYVIIGIIVGD), 354 to 374 (YMLFYISMNLGTFACIVSFGL), 395 to 415 (ALSSALCLLSLGGLPPLAGFF), and 418 to 438 (LYLFWCGWQAGLYFLVSIGLL).

It belongs to the complex I subunit 2 family. In terms of assembly, NDH is composed of at least 16 different subunits, 5 of which are encoded in the nucleus.

It localises to the plastid. The protein resides in the chloroplast thylakoid membrane. It catalyses the reaction a plastoquinone + NADH + (n+1) H(+)(in) = a plastoquinol + NAD(+) + n H(+)(out). The enzyme catalyses a plastoquinone + NADPH + (n+1) H(+)(in) = a plastoquinol + NADP(+) + n H(+)(out). Functionally, NDH shuttles electrons from NAD(P)H:plastoquinone, via FMN and iron-sulfur (Fe-S) centers, to quinones in the photosynthetic chain and possibly in a chloroplast respiratory chain. The immediate electron acceptor for the enzyme in this species is believed to be plastoquinone. Couples the redox reaction to proton translocation, and thus conserves the redox energy in a proton gradient. The polypeptide is NAD(P)H-quinone oxidoreductase subunit 2, chloroplastic (Coelogyne cristata (Orchid)).